Here is an 85-residue protein sequence, read N- to C-terminus: Beta-insect depressant toxin Lqh-dprIT3e (85 aa).

Residues 1–21 (MKLLLLLTISASMLIEGLVNA) form the signal peptide. Positions 22–82 (DGYIRGGDGC…EWDYETDTCG (61 aa)) constitute an LCN-type CS-alpha/beta domain. Cystine bridges form between Cys31-Cys81, Cys35-Cys56, Cys42-Cys63, and Cys46-Cys65. Glycine amide is present on Gly82.

This sequence belongs to the long (4 C-C) scorpion toxin superfamily. Sodium channel inhibitor family. Beta subfamily. As to expression, expressed by the venom gland.

Its subcellular location is the secreted. Its function is as follows. Depressant insect beta-toxins cause a transient contraction paralysis followed by a slow flaccid paralysis. They bind voltage-independently at site-4 of sodium channels (Nav) and block action potentials, primarily by depolarizing the axonal membrane and suppressing the sodium current. This depressant toxin is active only on insects. It is found in a relatively small amount in the venom. This is Beta-insect depressant toxin Lqh-dprIT3e from Leiurus hebraeus (Hebrew deathstalker scorpion).